The primary structure comprises 709 residues: F-box only protein 40 (709 aa).

The TRAF-type zinc-finger motif lies at 53–112; it reads EHQLLCPLEQVPCLNSEYGCPLSMSRHKLAKHLQVCPASVVCCSMEWNRWPNVDSETTLH. The disordered stretch occupies residues 232–280; sequence TNSSASCESKNKNDSEKEQISSGHNMVEGEGAPKKKEPQENQKQQDVRT. Basic and acidic residues-rich tracts occupy residues 240–250 and 262–277; these read SKNKNDSEKEQ and GAPKKKEPQENQKQQD. Residues 570 to 624 form the F-box domain; the sequence is QNSLTSLPLEILKYIAGFLDSVSLAQLSQVSVLMRNICATLLQERGMVLLQWKKK.

Directly interacts with SKP1 and CUL1. Expressed only in heart and skeletal muscle.

It is found in the cytoplasm. Its function is as follows. Probable substrate-recognition component of the SCF (SKP1-CUL1-F-box protein)-type E3 ubiquitin ligase complex that may function in myogenesis. The sequence is that of F-box only protein 40 (FBXO40) from Homo sapiens (Human).